We begin with the raw amino-acid sequence, 218 residues long: ATP-dependent dethiobiotin synthetase BioD (218 aa).

Position 9 to 15 (9 to 15 (TNAGKTT)) interacts with ATP. Thr-14 serves as a coordination point for Mg(2+). The active site involves Lys-35. Residue Lys-35 participates in phosphate binding. Substrate is bound at residue Thr-39. ATP is bound by residues Asp-50, Glu-116, and 116–119 (EGAG). Mg(2+)-binding residues include Asp-50 and Glu-116. Residue 116–119 (EGAG) coordinates phosphate. Position 151 to 154 (151 to 154 (GLIN)) interacts with substrate. Residues Asn-175 and 175–177 (NLK) contribute to the ATP site.

It belongs to the dethiobiotin synthetase family. As to quaternary structure, homodimer. Mg(2+) is required as a cofactor.

Its subcellular location is the cytoplasm. The catalysed reaction is (7R,8S)-7,8-diammoniononanoate + CO2 + ATP = (4R,5S)-dethiobiotin + ADP + phosphate + 3 H(+). Its pathway is cofactor biosynthesis; biotin biosynthesis; biotin from 7,8-diaminononanoate: step 1/2. Catalyzes a mechanistically unusual reaction, the ATP-dependent insertion of CO2 between the N7 and N8 nitrogen atoms of 7,8-diaminopelargonic acid (DAPA, also called 7,8-diammoniononanoate) to form a ureido ring. In Helicobacter pylori (strain ATCC 700392 / 26695) (Campylobacter pylori), this protein is ATP-dependent dethiobiotin synthetase BioD.